A 506-amino-acid polypeptide reads, in one-letter code: uncharacterized protein (506 aa).

Belongs to the Mg-chelatase subunits D/I family. ComM subfamily.

This is an uncharacterized protein from Escherichia coli (strain K12).